The sequence spans 149 residues: Calmodulin (149 aa).

Ala2 carries the post-translational modification N-acetylalanine. EF-hand domains follow at residues 8 to 43 (EQIA…LGQN), 44 to 79 (PTEA…KMKD), 81 to 116 (DSEE…LGEK), and 117 to 149 (LSED…MMSK). Positions 21, 23, 25, 27, 32, 57, 59, 61, 63, 68, 94, 96, 98, 100, 105, 130, 132, 134, 136, and 141 each coordinate Ca(2+).

This sequence belongs to the calmodulin family.

Its function is as follows. Calmodulin mediates the control of a large number of enzymes, ion channels and other proteins by Ca(2+). Among the enzymes to be stimulated by the calmodulin-Ca(2+) complex are a number of protein kinases and phosphatases. The chain is Calmodulin (CMD1) from Blastocladiella emersonii (Aquatic fungus).